A 533-amino-acid polypeptide reads, in one-letter code: Subtilisin-like protease 1 (533 aa).

Positions 1–19 (MGVFRFISISLAAVSAANA) are cleaved as a signal peptide. The propeptide occupies 20-116 (AQILSMPHAQ…VEPDTIISVH (97 aa)). An Inhibitor I9 domain is found at 34–115 (SYIVMMKDDT…FVEPDTIISV (82 aa)). The 275-residue stretch at 126–400 (SWGLARISNP…NVLINNGGAK (275 aa)) folds into the Peptidase S8 domain. Catalysis depends on charge relay system residues Asp158 and His190. The interval 175–198 (GSNQVNDGDDRDGSGHGTHTSGTM) is disordered. N-linked (GlcNAc...) asparagine glycans are attached at residues Asn233 and Asn251. Over residues 282–294 (NDNQDAQSSSPAS) the composition is skewed to polar residues. The disordered stretch occupies residues 282-312 (NDNQDAQSSSPASEPSVCTVGSSAEDDSRSS). Ser345 serves as the catalytic Charge relay system. Over residues 378-394 (TSSITDAGPGTPTNVLI) the composition is skewed to polar residues. Residues 378 to 512 (TSSITDAGPG…YPGGDNFDFD (135 aa)) form a disordered region. Pro residues predominate over residues 405–470 (NPNPAPSPSP…FPGEPFPGEP (66 aa)). A compositionally biased stretch (low complexity) spans 471–487 (FPGESFPGESFPGESAP). The segment covering 488-502 (APAPMPPSPQHPHTP) has biased composition (pro residues).

It belongs to the peptidase S8 family.

The protein resides in the secreted. Its function is as follows. Secreted subtilisin-like serine protease with keratinolytic activity that contributes to pathogenicity. This is Subtilisin-like protease 1 (SUB1) from Arthroderma benhamiae (strain ATCC MYA-4681 / CBS 112371) (Trichophyton mentagrophytes).